Reading from the N-terminus, the 511-residue chain is Cytochrome P450 monooxygenase cypX (511 aa).

The helical transmembrane segment at 18–38 (LPFSLALVAAAFVLYNIVSII) threads the bilayer. Residues N162 and N407 are each glycosylated (N-linked (GlcNAc...) asparagine). C454 is a binding site for heme.

Belongs to the cytochrome P450 family. Heme serves as cofactor.

The protein resides in the membrane. Its pathway is mycotoxin biosynthesis. Its function is as follows. Cytochrome P450 monooxygenase; part of the fragmented gene cluster that mediates the biosynthesis of dothistromin (DOTH), a polyketide toxin very similar in structure to the aflatoxin precursor, versicolorin B. The first step of the pathway is the conversion of acetate to norsolorinic acid (NOR) and requires the fatty acid synthase subunits hexA and hexB, as well as the polyketide synthase pksA. PksA combines a hexanoyl starter unit and 7 malonyl-CoA extender units to synthesize the precursor NOR. The hexanoyl starter unit is provided to the acyl-carrier protein (ACP) domain by the fungal fatty acid synthase hexA/hexB. The second step is the conversion of NOR to averantin (AVN) and requires the norsolorinic acid ketoreductase nor1, which catalyzes the dehydration of norsolorinic acid to form (1'S)-averantin. The cytochrome P450 monooxygenase avnA then catalyzes the hydroxylation of AVN to 5'hydroxyaverantin (HAVN). The next step is performed by adhA that transforms HAVN to averufin (AVF). Averufin might then be converted to hydroxyversicolorone by cypX and avfA. Hydroxyversicolorone is further converted versiconal hemiacetal acetate (VHA) by moxY. VHA is then the substrate for the versiconal hemiacetal acetate esterase est1 to yield versiconal (VAL). Versicolorin B synthase vbsA then converts VAL to versicolorin B (VERB) by closing the bisfuran ring. Then, the activity of the versicolorin B desaturase verB leads to versicolorin A (VERA). DotB, a predicted chloroperoxidase, may perform epoxidation of the A-ring of VERA. Alternatively, a cytochrome P450, such as cypX or avnA could catalyze this step. It is also possible that another, uncharacterized, cytochrome P450 enzyme is responsible for this step. Opening of the epoxide could potentially be achieved by the epoxide hydrolase epoA. However, epoA seems not to be required for DOTH biosynthesis, but other epoxide hydrolases may have the ability to complement this hydrolysis. Alternatively, opening of the epoxide ring could be achieved non-enzymatically. The next step is the deoxygenation of ring A to yield the 5,8-dihydroxyanthraquinone which is most likely catalyzed by the NADPH dehydrogenase encoded by ver1. The last stages of DOTH biosynthesis are proposed to involve hydroxylation of the bisfuran. OrdB and norB might have oxidative roles here. An alternative possibility is that cytochrome P450 monoogenases such as avnA and cypX might perform these steps in addition to previously proposed steps. The sequence is that of Cytochrome P450 monooxygenase cypX from Dothistroma septosporum (Red band needle blight fungus).